The following is a 377-amino-acid chain: Alanine racemase (377 aa).

The Proton acceptor; specific for D-alanine role is filled by lysine 37. Residue lysine 37 is modified to N6-(pyridoxal phosphate)lysine. Arginine 135 contacts substrate. The active-site Proton acceptor; specific for L-alanine is tyrosine 271. Residue methionine 319 participates in substrate binding.

Belongs to the alanine racemase family. Requires pyridoxal 5'-phosphate as cofactor.

It carries out the reaction L-alanine = D-alanine. The protein operates within amino-acid biosynthesis; D-alanine biosynthesis; D-alanine from L-alanine: step 1/1. Functionally, catalyzes the interconversion of L-alanine and D-alanine. May also act on other amino acids. The chain is Alanine racemase (alr) from Helicobacter pylori (strain P12).